We begin with the raw amino-acid sequence, 81 residues long: uncharacterized protein (81 aa).

This sequence to Synechocystis PCC 6803 ssr2439.

May have a regulatory function. This is an uncharacterized protein from Synechococcus elongatus (strain ATCC 33912 / PCC 7942 / FACHB-805) (Anacystis nidulans R2).